A 138-amino-acid polypeptide reads, in one-letter code: MNAVVLFSVLFALACGQVSSFCIPTEYMMYVDRRECAYCLTINTTICAGYCMTRDINGKLFLPKYALSQDVCTYRDFTYRTVEIPGCPHHVAPYFSYPVALSCKCGKCNTDYSDCTHEAVKTNYCTKPQTFYLGGFSG.

Positions 1–20 are cleaved as a signal peptide; the sequence is MNAVVLFSVLFALACGQVSS. Intrachain disulfides connect cysteine 22–cysteine 72, cysteine 36–cysteine 87, cysteine 39–cysteine 125, cysteine 47–cysteine 103, cysteine 51–cysteine 105, and cysteine 108–cysteine 115. Residue asparagine 43 is glycosylated (N-linked (GlcNAc...) asparagine). Positions 133 to 138 are excised as a propeptide; the sequence is LGGFSG.

It belongs to the glycoprotein hormones subunit beta family. As to quaternary structure, heterodimer of a common alpha chain and a unique beta chain which confers biological specificity to thyrotropin, lutropin, follitropin and gonadotropin.

The protein resides in the secreted. In terms of biological role, indispensable for the control of thyroid structure and metabolism. This is Thyrotropin subunit beta (Tshb) from Rattus norvegicus (Rat).